The chain runs to 241 residues: MNRPSLAGAVHLHGFSRSFHGKQVLDDLGLDIAPGQFVALLGESGSGKTTLLRALAGLDVEARSSGTAVAHGNVSVLFQDSRLLPWLTVLDNLTLGLDAQAVRPAAAQLLREVGLADKAAAWPASLSGGQKQRAALARSLLREPHVLLADEPFGALDALTRLRMQGLLRRMVERVRPTVILVTHDVDESLLLADRILVLRDGKIAEDHALDLAHPRRPDHPAFMQLRATLLRSLGVEAEFV.

The 217-residue stretch at 10–226 (VHLHGFSRSF…RPDHPAFMQL (217 aa)) folds into the ABC transporter domain. An ATP-binding site is contributed by 42-49 (GESGSGKT).

It belongs to the ABC transporter superfamily. Aliphatic sulfonates importer (TC 3.A.1.17.2) family. The complex is composed of two ATP-binding proteins (SsuB), two transmembrane proteins (SsuC) and a solute-binding protein (SsuA).

The protein localises to the cell inner membrane. The enzyme catalyses ATP + H2O + aliphatic sulfonate-[sulfonate-binding protein]Side 1 = ADP + phosphate + aliphatic sulfonateSide 2 + [sulfonate-binding protein]Side 1.. Its function is as follows. Part of the ABC transporter complex SsuABC involved in aliphatic sulfonates import. Responsible for energy coupling to the transport system. In Delftia acidovorans (Pseudomonas acidovorans), this protein is Aliphatic sulfonates import ATP-binding protein SsuB.